The primary structure comprises 541 residues: Alpha-zingiberene synthase (541 aa).

Asp-296, Asp-300, Asp-437, Thr-441, and Glu-445 together coordinate Mg(2+). Positions 296–300 (DDIYD) match the DDXXD motif motif.

This sequence belongs to the terpene synthase family. It depends on Mg(2+) as a cofactor. Mn(2+) is required as a cofactor.

The catalysed reaction is (2E,6E)-farnesyl diphosphate = alpha-zingiberene + diphosphate. It functions in the pathway secondary metabolite biosynthesis; terpenoid biosynthesis. Functionally, sesquiterpene synthase that catalyzes the formation of alpha-zingiberene and other sesquiterpenes from trans,trans-farnesyl diphosphate (FPP). May have an additional monoterpene synthase activity. The polypeptide is Alpha-zingiberene synthase (ZIS) (Ocimum basilicum (Sweet basil)).